A 186-amino-acid polypeptide reads, in one-letter code: Adenine phosphoribosyltransferase (186 aa).

Belongs to the purine/pyrimidine phosphoribosyltransferase family. Homodimer.

Its subcellular location is the cytoplasm. It carries out the reaction AMP + diphosphate = 5-phospho-alpha-D-ribose 1-diphosphate + adenine. It functions in the pathway purine metabolism; AMP biosynthesis via salvage pathway; AMP from adenine: step 1/1. In terms of biological role, catalyzes a salvage reaction resulting in the formation of AMP, that is energically less costly than de novo synthesis. This chain is Adenine phosphoribosyltransferase, found in Xanthomonas oryzae pv. oryzae (strain PXO99A).